The chain runs to 278 residues: uncharacterized protein (278 aa).

It localises to the cytoplasm. It is found in the nucleus. Its function is as follows. Probable methyltransferase. This is an uncharacterized protein from Schizosaccharomyces pombe (strain 972 / ATCC 24843) (Fission yeast).